The following is a 356-amino-acid chain: Homoserine O-acetyltransferase (356 aa).

An AB hydrolase-1 domain is found at 49 to 337 (VLICHALTGS…KSTHGHDAFL (289 aa)). Ser143 acts as the Nucleophile in catalysis. Arg212 serves as a coordination point for substrate. Residues Asp304 and His333 contribute to the active site. Asp334 is a binding site for substrate.

This sequence belongs to the AB hydrolase superfamily. MetX family. As to quaternary structure, homodimer.

It localises to the cytoplasm. The catalysed reaction is L-homoserine + acetyl-CoA = O-acetyl-L-homoserine + CoA. It functions in the pathway amino-acid biosynthesis; L-methionine biosynthesis via de novo pathway; O-acetyl-L-homoserine from L-homoserine: step 1/1. Transfers an acetyl group from acetyl-CoA to L-homoserine, forming acetyl-L-homoserine. This chain is Homoserine O-acetyltransferase, found in Nostoc punctiforme (strain ATCC 29133 / PCC 73102).